The following is a 711-amino-acid chain: Polyribonucleotide nucleotidyltransferase (711 aa).

Mg(2+) contacts are provided by Asp-486 and Asp-492. Residues 553 to 612 (PRIHTIKINPDKIKDVIGKGGSVIRALTEETGTTIEIEDDGTVKIAATDGEKAKHAIRRI) enclose the KH domain. Residues 622–690 (GRIYNGKVTR…RQGRVRLSIK (69 aa)) enclose the S1 motif domain. The tract at residues 690–711 (KEATEQSQPAAAPEAPAAEQGE) is disordered. The span at 694 to 711 (EQSQPAAAPEAPAAEQGE) shows a compositional bias: low complexity.

The protein belongs to the polyribonucleotide nucleotidyltransferase family. Component of the RNA degradosome, which is a multiprotein complex involved in RNA processing and mRNA degradation. Requires Mg(2+) as cofactor.

Its subcellular location is the cytoplasm. It carries out the reaction RNA(n+1) + phosphate = RNA(n) + a ribonucleoside 5'-diphosphate. In terms of biological role, involved in mRNA degradation. Catalyzes the phosphorolysis of single-stranded polyribonucleotides processively in the 3'- to 5'-direction. In Citrobacter koseri (strain ATCC BAA-895 / CDC 4225-83 / SGSC4696), this protein is Polyribonucleotide nucleotidyltransferase.